The following is a 300-amino-acid chain: NAD kinase (300 aa).

Residue Asp-75 is the Proton acceptor of the active site. NAD(+) contacts are provided by residues 75 to 76 (DG), 149 to 150 (ND), Arg-177, Asp-179, 190 to 195 (TAYALS), Ala-214, and Gln-248.

Belongs to the NAD kinase family. The cofactor is a divalent metal cation.

It localises to the cytoplasm. The catalysed reaction is NAD(+) + ATP = ADP + NADP(+) + H(+). Functionally, involved in the regulation of the intracellular balance of NAD and NADP, and is a key enzyme in the biosynthesis of NADP. Catalyzes specifically the phosphorylation on 2'-hydroxyl of the adenosine moiety of NAD to yield NADP. The polypeptide is NAD kinase (Burkholderia cenocepacia (strain ATCC BAA-245 / DSM 16553 / LMG 16656 / NCTC 13227 / J2315 / CF5610) (Burkholderia cepacia (strain J2315))).